The following is a 525-amino-acid chain: GMP synthase [glutamine-hydrolyzing] (525 aa).

The region spanning 9–207 (RILILDFGSQ…VRDICQCEAL (199 aa)) is the Glutamine amidotransferase type-1 domain. Cysteine 86 acts as the Nucleophile in catalysis. Active-site residues include histidine 181 and glutamate 183. Residues 208-400 (WTPAKIIDDA…LGLPYDMLYR (193 aa)) form the GMPS ATP-PPase domain. Residue 235 to 241 (SGGVDSS) participates in ATP binding.

As to quaternary structure, homodimer.

The catalysed reaction is XMP + L-glutamine + ATP + H2O = GMP + L-glutamate + AMP + diphosphate + 2 H(+). Its pathway is purine metabolism; GMP biosynthesis; GMP from XMP (L-Gln route): step 1/1. Catalyzes the synthesis of GMP from XMP. The polypeptide is GMP synthase [glutamine-hydrolyzing] (Salmonella schwarzengrund (strain CVM19633)).